A 200-amino-acid chain; its full sequence is ADP-ribosylation factor-like protein 4D (200 aa).

Gly2 is lipidated: N-myristoyl glycine. GTP contacts are provided by residues 27–34, 75–79, and 134–137; these read GLDSAGKT, DVGGQ, and NKQD.

It belongs to the small GTPase superfamily. Arf family. Interacts with CYTH2; the interaction is direct and ARL4D GTP-dependent. Does not interact with ARL4D.

The protein resides in the nucleus. It is found in the nucleolus. The protein localises to the cell membrane. It localises to the cytoplasm. Its function is as follows. Small GTP-binding protein which cycles between an inactive GDP-bound and an active GTP-bound form, and the rate of cycling is regulated by guanine nucleotide exchange factors (GEF) and GTPase-activating proteins (GAP). GTP-binding protein that does not act as an allosteric activator of the cholera toxin catalytic subunit. Recruits CYTH1, CYTH2, CYTH3 and CYTH4 to the plasma membrane in GDP-bound form. This Bos taurus (Bovine) protein is ADP-ribosylation factor-like protein 4D (ARL4D).